Consider the following 322-residue polypeptide: Large ribosomal subunit protein uL15m (322 aa).

A mitochondrion-targeting transit peptide spans 1 to 57; sequence MKAERQTGLRNSFTTVIGRKLINTFVPSMMLTSVAGNDIFFRGLFKSPVLAFQSYRY. Residues 69–99 are disordered; the sequence is GSTKSFKRLGRGPSSGLGKTSGRGQKGQKAR. Over residues 81 to 93 the composition is skewed to gly residues; that stretch reads PSSGLGKTSGRGQ.

It belongs to the universal ribosomal protein uL15 family. Component of the mitochondrial large ribosomal subunit (mt-LSU). Mature yeast 74S mitochondrial ribosomes consist of a small (37S) and a large (54S) subunit. The 37S small subunit contains a 15S ribosomal RNA (15S mt-rRNA) and 34 different proteins. The 54S large subunit contains a 21S rRNA (21S mt-rRNA) and 46 different proteins.

It localises to the mitochondrion. Its function is as follows. Component of the mitochondrial ribosome (mitoribosome), a dedicated translation machinery responsible for the synthesis of mitochondrial genome-encoded proteins, including at least some of the essential transmembrane subunits of the mitochondrial respiratory chain. The mitoribosomes are attached to the mitochondrial inner membrane and translation products are cotranslationally integrated into the membrane. This is Large ribosomal subunit protein uL15m (MRPL10) from Saccharomyces cerevisiae (strain ATCC 204508 / S288c) (Baker's yeast).